The following is a 782-amino-acid chain: Endonuclease MutS2 (782 aa).

Position 336 to 343 (336 to 343) interacts with ATP; sequence GPNTGGKT. Residues 707-782 form the Smr domain; it reads LDLRGYRYED…GFGVTVATLK (76 aa).

The protein belongs to the DNA mismatch repair MutS family. MutS2 subfamily. In terms of assembly, homodimer. Binds to stalled ribosomes, contacting rRNA.

Functionally, endonuclease that is involved in the suppression of homologous recombination and thus may have a key role in the control of bacterial genetic diversity. Acts as a ribosome collision sensor, splitting the ribosome into its 2 subunits. Detects stalled/collided 70S ribosomes which it binds and splits by an ATP-hydrolysis driven conformational change. Acts upstream of the ribosome quality control system (RQC), a ribosome-associated complex that mediates the extraction of incompletely synthesized nascent chains from stalled ribosomes and their subsequent degradation. Probably generates substrates for RQC. The polypeptide is Endonuclease MutS2 (Staphylococcus aureus (strain MSSA476)).